Here is a 303-residue protein sequence, read N- to C-terminus: Coenzyme PQQ synthesis protein B (303 aa).

It belongs to the PqqB family.

Its pathway is cofactor biosynthesis; pyrroloquinoline quinone biosynthesis. May be involved in the transport of PQQ or its precursor to the periplasm. This is Coenzyme PQQ synthesis protein B from Pseudomonas putida (strain ATCC 47054 / DSM 6125 / CFBP 8728 / NCIMB 11950 / KT2440).